A 503-amino-acid polypeptide reads, in one-letter code: Probable cytosol aminopeptidase (503 aa).

Positions 270 and 275 each coordinate Mn(2+). Residue lysine 282 is part of the active site. Mn(2+)-binding residues include aspartate 293, aspartate 352, and glutamate 354. Residue arginine 356 is part of the active site.

Belongs to the peptidase M17 family. It depends on Mn(2+) as a cofactor.

The protein localises to the cytoplasm. It carries out the reaction Release of an N-terminal amino acid, Xaa-|-Yaa-, in which Xaa is preferably Leu, but may be other amino acids including Pro although not Arg or Lys, and Yaa may be Pro. Amino acid amides and methyl esters are also readily hydrolyzed, but rates on arylamides are exceedingly low.. The catalysed reaction is Release of an N-terminal amino acid, preferentially leucine, but not glutamic or aspartic acids.. Functionally, presumably involved in the processing and regular turnover of intracellular proteins. Catalyzes the removal of unsubstituted N-terminal amino acids from various peptides. This chain is Probable cytosol aminopeptidase, found in Shigella dysenteriae serotype 1 (strain Sd197).